Reading from the N-terminus, the 587-residue chain is Deoxynucleoside triphosphate triphosphohydrolase sahd-1 (587 aa).

Positions 92–262 (RFVHSLGTFS…GHDVDKMDYL (171 aa)) constitute an HD domain. Residues histidine 95, histidine 134, aspartate 135, and aspartate 257 each coordinate Zn(2+). A disordered region spans residues 554–587 (EKFLTPRKRSPQDSPDEVSSSCSTAKRRLEFGSS). A Phosphothreonine modification is found at threonine 558.

The protein belongs to the SAMHD1 family. Homodimer. Homotetramer; in dGTP-bound form. It depends on Zn(2+) as a cofactor.

The protein resides in the nucleus. It localises to the chromosome. The enzyme catalyses a 2'-deoxyribonucleoside 5'-triphosphate + H2O = a 2'-deoxyribonucleoside + triphosphate + H(+). With respect to regulation, allosterically activated and regulated by GTP or dGTP. Allosteric activation promotes the formation of highly active homotetramers. Phosphorylation impairs homotetramerization, thereby inhibiting dNTPase activity. Functionally, has deoxynucleoside triphosphate (dNTPase) activity. dNTPase activity acts as a regulator of DNA precursor pools by regulating dNTP pools. Phosphorylation acts as a switch to control dNTPase-dependent and -independent functions. In Caenorhabditis elegans, this protein is Deoxynucleoside triphosphate triphosphohydrolase sahd-1.